A 325-amino-acid chain; its full sequence is Flotillin-like protein FloA (325 aa).

The next 2 membrane-spanning stretches (helical) occupy residues 4-24 (LGIV…FSFI) and 26-46 (VGLW…TLVA).

It belongs to the flotillin-like FloA family. In terms of assembly, homooligomerizes.

The protein localises to the cell membrane. It is found in the membrane raft. Found in functional membrane microdomains (FMM) that may be equivalent to eukaryotic membrane rafts. FMMs are highly dynamic and increase in number as cells age. Flotillins are thought to be important factors in membrane fluidity. This is Flotillin-like protein FloA from Thermus thermophilus (strain ATCC BAA-163 / DSM 7039 / HB27).